The following is a 281-amino-acid chain: 2-dehydro-3-deoxyphosphooctonate aldolase (281 aa).

It belongs to the KdsA family.

It is found in the cytoplasm. The catalysed reaction is D-arabinose 5-phosphate + phosphoenolpyruvate + H2O = 3-deoxy-alpha-D-manno-2-octulosonate-8-phosphate + phosphate. Its pathway is carbohydrate biosynthesis; 3-deoxy-D-manno-octulosonate biosynthesis; 3-deoxy-D-manno-octulosonate from D-ribulose 5-phosphate: step 2/3. The protein operates within bacterial outer membrane biogenesis; lipopolysaccharide biosynthesis. This Pseudomonas aeruginosa (strain UCBPP-PA14) protein is 2-dehydro-3-deoxyphosphooctonate aldolase.